Here is a 245-residue protein sequence, read N- to C-terminus: NAD(P)H-hydrate epimerase (245 aa).

In terms of domain architecture, YjeF N-terminal spans 21–221 (MREIDRLAVQ…DLGIPPAVYT (201 aa)). Residue 72–76 (GNGGG) participates in (6S)-NADPHX binding. Positions 73 and 135 each coordinate K(+). (6S)-NADPHX is bound by residues 139 to 145 (GYSLLGA) and D168. Position 171 (S171) interacts with K(+).

Belongs to the NnrE/AIBP family. K(+) is required as a cofactor.

It carries out the reaction (6R)-NADHX = (6S)-NADHX. It catalyses the reaction (6R)-NADPHX = (6S)-NADPHX. Its function is as follows. Catalyzes the epimerization of the S- and R-forms of NAD(P)HX, a damaged form of NAD(P)H that is a result of enzymatic or heat-dependent hydration. This is a prerequisite for the S-specific NAD(P)H-hydrate dehydratase to allow the repair of both epimers of NAD(P)HX. This chain is NAD(P)H-hydrate epimerase, found in Dehalogenimonas lykanthroporepellens (strain ATCC BAA-1523 / JCM 15061 / BL-DC-9).